Here is a 276-residue protein sequence, read N- to C-terminus: Large ribosomal subunit protein uL2 (276 aa).

The tract at residues 224 to 265 is disordered; that stretch reads GTAMNPIDHPHGGGEGKNFGKHPVSPWGVQTKGKRTRSNKRT.

It belongs to the universal ribosomal protein uL2 family. As to quaternary structure, part of the 50S ribosomal subunit. Forms a bridge to the 30S subunit in the 70S ribosome.

Its function is as follows. One of the primary rRNA binding proteins. Required for association of the 30S and 50S subunits to form the 70S ribosome, for tRNA binding and peptide bond formation. It has been suggested to have peptidyltransferase activity; this is somewhat controversial. Makes several contacts with the 16S rRNA in the 70S ribosome. The chain is Large ribosomal subunit protein uL2 from Blochmanniella floridana.